The primary structure comprises 145 residues: MALRLILGFDYGTKQIGVAVGQAITGQARELCTLKAQNGVPDWNQVEALIKEWKPDAVVVGLPLNMDGSPSDMCVRAEKFARRLNGRFNVPFYTHDERLTTFEAKGERLARGGQKGSYRDNPVDAIAAALLLQGWLDENAGLLNT.

This sequence belongs to the YqgF nuclease family.

Its subcellular location is the cytoplasm. Functionally, could be a nuclease involved in processing of the 5'-end of pre-16S rRNA. This chain is Putative pre-16S rRNA nuclease, found in Pseudomonas fluorescens (strain ATCC BAA-477 / NRRL B-23932 / Pf-5).